A 156-amino-acid chain; its full sequence is Endoribonuclease YbeY (156 aa).

Zn(2+)-binding residues include H122, H126, and H132.

This sequence belongs to the endoribonuclease YbeY family. The cofactor is Zn(2+).

The protein resides in the cytoplasm. In terms of biological role, single strand-specific metallo-endoribonuclease involved in late-stage 70S ribosome quality control and in maturation of the 3' terminus of the 16S rRNA. The sequence is that of Endoribonuclease YbeY from Bacillus cereus (strain ATCC 14579 / DSM 31 / CCUG 7414 / JCM 2152 / NBRC 15305 / NCIMB 9373 / NCTC 2599 / NRRL B-3711).